The chain runs to 413 residues: S-adenosylmethionine synthase (413 aa).

An ATP-binding site is contributed by His15. A Mg(2+)-binding site is contributed by Asp17. Position 43 (Glu43) interacts with K(+). 2 residues coordinate L-methionine: Glu56 and Gln100. Residues 100–110 form a flexible loop region; it reads QSPDISQGVNE. ATP-binding positions include 171-173, 248-249, Asp257, 263-264, Ala280, and Lys284; these read DGK, KF, and RK. Asp257 provides a ligand contact to L-methionine. Lys288 lines the L-methionine pocket.

It belongs to the AdoMet synthase family. In terms of assembly, homotetramer; dimer of dimers. Mg(2+) is required as a cofactor. It depends on K(+) as a cofactor.

The protein localises to the cytoplasm. The enzyme catalyses L-methionine + ATP + H2O = S-adenosyl-L-methionine + phosphate + diphosphate. It participates in amino-acid biosynthesis; S-adenosyl-L-methionine biosynthesis; S-adenosyl-L-methionine from L-methionine: step 1/1. Functionally, catalyzes the formation of S-adenosylmethionine (AdoMet) from methionine and ATP. The overall synthetic reaction is composed of two sequential steps, AdoMet formation and the subsequent tripolyphosphate hydrolysis which occurs prior to release of AdoMet from the enzyme. The polypeptide is S-adenosylmethionine synthase (Prochlorococcus marinus (strain AS9601)).